A 297-amino-acid polypeptide reads, in one-letter code: Thiosulfate sulfurtransferase (297 aa).

N6-acetyllysine; alternate is present on Lys14. Lys14 is subject to N6-succinyllysine; alternate. In terms of domain architecture, Rhodanese 1 spans 25 to 143 (LGPSLRVLDA…WLKEGHPVTS (119 aa)). An O-linked (GlcNAc) serine glycan is attached at Ser35. Ser38 carries the post-translational modification Phosphoserine. Lys136 is subject to N6-acetyllysine; alternate. Lys136 bears the N6-succinyllysine; alternate mark. The tract at residues 144 to 159 (EPSRPEPAVFKATLNL) is hinge. Position 163 is an N6-acetyllysine (Lys163). One can recognise a Rhodanese 2 domain in the interval 173–288 (QSKRFQLVDS…WFRRAPPETR (116 aa)). N6-acetyllysine; alternate is present on Lys175. Position 175 is an N6-succinyllysine; alternate (Lys175). Position 187 (Arg187) interacts with substrate. An N6-acetyllysine; alternate mark is found at Lys219 and Lys224. Lys219 and Lys224 each carry N6-succinyllysine; alternate. Position 236 is an N6-acetyllysine (Lys236). Lys237 carries the N6-acetyllysine; alternate modification. At Lys237 the chain carries N6-succinyllysine; alternate. The active-site Cysteine persulfide intermediate is Cys248. Substrate is bound at residue Lys250.

As to quaternary structure, monomer. Expressed in numerous tissues.

It localises to the mitochondrion matrix. The catalysed reaction is thiosulfate + hydrogen cyanide = thiocyanate + sulfite + 2 H(+). Together with MRPL18, acts as a mitochondrial import factor for the cytosolic 5S rRNA. Only the nascent unfolded cytoplasmic form is able to bind to the 5S rRNA. Formation of iron-sulfur complexes and cyanide detoxification. This Mus musculus (Mouse) protein is Thiosulfate sulfurtransferase (Tst).